A 362-amino-acid chain; its full sequence is Putative gustatory receptor 89a (362 aa).

The Cytoplasmic portion of the chain corresponds to 1-38 (MLRFPHVCGLCLLLKYWQILALAPFRTSEPMVARCQRW). A helical transmembrane segment spans residues 39 to 59 (MTLIAVFRWLLLTSMAPFVLW). At 60–74 (KSAAMYEATNVRHSM) the chain is on the extracellular side. Residues 75–95 (VFKTIALATMTGDVCISLALL) traverse the membrane as a helical segment. At 96–126 (GNHLWNRRELANLVNDLARLHRRRRLSWWST) the chain is on the cytoplasmic side. The chain crosses the membrane as a helical span at residues 127–147 (LFLWLKLLLSLYDLLCSVPFL). Residues 148-166 (KGAGGRLPWSQLVAYGVQL) are Extracellular-facing. The helical transmembrane segment at 167–187 (YFQHVASVYGNGIFGGILLML) threads the bilayer. At 188-223 (ECYNQLEREEPTNLARLLQKEYSWLRLIQRFVKLFQ) the chain is on the cytoplasmic side. The chain crosses the membrane as a helical span at residues 224 to 244 (LGIFLLVLGSFVNIMVNIYAF). Residues 245-255 (MSYYVSLHGVP) lie on the Extracellular side of the membrane. A helical transmembrane segment spans residues 256 to 276 (LTISNNCLVLAIQLYAVILAA). At 277–333 (HLCQVRSAKLRKKCLQLEYVPEGLTQEQAMASTPFPVLTPTGNVKFRILGVFILDNS) the chain is on the cytoplasmic side. The helical transmembrane segment at 334–354 (FWLFLVSYAMNFIVVILQTSF) threads the bilayer. Residues 355–362 (EHINHGEI) lie on the Extracellular side of the membrane.

It belongs to the insect chemoreceptor superfamily. Gustatory receptor (GR) family. Gr77a subfamily.

Its subcellular location is the cell membrane. Probable gustatory receptor which mediates acceptance or avoidance behavior, depending on its substrates. The sequence is that of Putative gustatory receptor 89a (Gr89a) from Drosophila melanogaster (Fruit fly).